Consider the following 142-residue polypeptide: uncharacterized protein (142 aa).

This is an uncharacterized protein from Homo sapiens (Human).